The following is a 409-amino-acid chain: Elongation factor Tu, chloroplastic (409 aa).

The tr-type G domain maps to 10-214 (KPHVNIGTIG…KIDEYIPTPE (205 aa)). Residues 19–26 (GHVDHGKT) form a G1 region. A GTP-binding site is contributed by 19–26 (GHVDHGKT). Threonine 26 contributes to the Mg(2+) binding site. Residues 60 to 64 (GITIN) are G2. Residues 81–84 (DCPG) form a G3 region. Residues 81–85 (DCPGH) and 136–139 (NKAD) each bind GTP. Positions 136 to 139 (NKAD) are G4. Residues 174-176 (SAL) form a G5 region.

Belongs to the TRAFAC class translation factor GTPase superfamily. Classic translation factor GTPase family. EF-Tu/EF-1A subfamily.

Its subcellular location is the plastid. The protein resides in the chloroplast. The enzyme catalyses GTP + H2O = GDP + phosphate + H(+). GTP hydrolase that promotes the GTP-dependent binding of aminoacyl-tRNA to the A-site of ribosomes during protein biosynthesis. The chain is Elongation factor Tu, chloroplastic (tufA) from Rhodomonas salina (Cryptomonas salina).